Here is a 97-residue protein sequence, read N- to C-terminus: Large ribosomal subunit protein eL21 (97 aa).

Residues 1–12 (MPSSNGPRQATR) are compositionally biased toward polar residues. The disordered stretch occupies residues 1–35 (MPSSNGPRQATRNKLKNDARERGTSPPQRSIEEYD).

It belongs to the eukaryotic ribosomal protein eL21 family.

This is Large ribosomal subunit protein eL21 from Natronomonas pharaonis (strain ATCC 35678 / DSM 2160 / CIP 103997 / JCM 8858 / NBRC 14720 / NCIMB 2260 / Gabara) (Halobacterium pharaonis).